Consider the following 131-residue polypeptide: NADH-quinone oxidoreductase subunit I 2 (131 aa).

4Fe-4S ferredoxin-type domains lie at leucine 42–glycine 71 and glutamate 81–glutamate 110. The [4Fe-4S] cluster site is built by cysteine 51, cysteine 54, cysteine 57, cysteine 61, cysteine 90, cysteine 93, cysteine 96, and cysteine 100.

Belongs to the complex I 23 kDa subunit family. As to quaternary structure, NDH-1 is composed of 14 different subunits. Subunits NuoA, H, J, K, L, M, N constitute the membrane sector of the complex. [4Fe-4S] cluster serves as cofactor.

It is found in the cell inner membrane. The catalysed reaction is a quinone + NADH + 5 H(+)(in) = a quinol + NAD(+) + 4 H(+)(out). Its function is as follows. NDH-1 shuttles electrons from NADH, via FMN and iron-sulfur (Fe-S) centers, to quinones in the respiratory chain. The immediate electron acceptor for the enzyme in this species is believed to be ubiquinone. Couples the redox reaction to proton translocation (for every two electrons transferred, four hydrogen ions are translocated across the cytoplasmic membrane), and thus conserves the redox energy in a proton gradient. This is NADH-quinone oxidoreductase subunit I 2 from Geobacter metallireducens (strain ATCC 53774 / DSM 7210 / GS-15).